Here is a 353-residue protein sequence, read N- to C-terminus: GTPase Obg (353 aa).

One can recognise an Obg domain in the interval 1-159 (MRFVDEVVIN…RVIRLELKLL (159 aa)). The region spanning 160–334 (ADVGLLGMPN…LCTAIMQELT (175 aa)) is the OBG-type G domain. Residues 166–173 (GMPNAGKS), 191–195 (FTTLH), 213–216 (DIPG), 284–287 (NKMD), and 315–317 (SAA) contribute to the GTP site. Residues S173 and T193 each contribute to the Mg(2+) site.

This sequence belongs to the TRAFAC class OBG-HflX-like GTPase superfamily. OBG GTPase family. As to quaternary structure, monomer. The cofactor is Mg(2+).

It localises to the cytoplasm. An essential GTPase which binds GTP, GDP and possibly (p)ppGpp with moderate affinity, with high nucleotide exchange rates and a fairly low GTP hydrolysis rate. Plays a role in control of the cell cycle, stress response, ribosome biogenesis and in those bacteria that undergo differentiation, in morphogenesis control. This is GTPase Obg from Dichelobacter nodosus (strain VCS1703A).